Reading from the N-terminus, the 189-residue chain is Peptidyl-tRNA hydrolase (189 aa).

Tyrosine 15 contacts tRNA. Histidine 20 acts as the Proton acceptor in catalysis. Positions 64, 66, and 112 each coordinate tRNA.

It belongs to the PTH family. In terms of assembly, monomer.

It is found in the cytoplasm. It catalyses the reaction an N-acyl-L-alpha-aminoacyl-tRNA + H2O = an N-acyl-L-amino acid + a tRNA + H(+). Functionally, hydrolyzes ribosome-free peptidyl-tRNAs (with 1 or more amino acids incorporated), which drop off the ribosome during protein synthesis, or as a result of ribosome stalling. Its function is as follows. Catalyzes the release of premature peptidyl moieties from peptidyl-tRNA molecules trapped in stalled 50S ribosomal subunits, and thus maintains levels of free tRNAs and 50S ribosomes. The polypeptide is Peptidyl-tRNA hydrolase (Sulfurihydrogenibium sp. (strain YO3AOP1)).